The chain runs to 232 residues: Orotidine 5'-phosphate decarboxylase (232 aa).

Residues aspartate 13, lysine 35, 62–71 (DLKFHDIPNT), threonine 122, arginine 182, glutamine 191, glycine 211, and arginine 212 contribute to the substrate site. Lysine 64 (proton donor) is an active-site residue.

This sequence belongs to the OMP decarboxylase family. Type 1 subfamily. Homodimer.

It catalyses the reaction orotidine 5'-phosphate + H(+) = UMP + CO2. Its pathway is pyrimidine metabolism; UMP biosynthesis via de novo pathway; UMP from orotate: step 2/2. Its function is as follows. Catalyzes the decarboxylation of orotidine 5'-monophosphate (OMP) to uridine 5'-monophosphate (UMP). The sequence is that of Orotidine 5'-phosphate decarboxylase from Pseudomonas syringae pv. tomato (strain ATCC BAA-871 / DC3000).